The primary structure comprises 150 residues: Ribonuclease K6 (150 aa).

The signal sequence occupies residues Met1–Ala23. His38 acts as the Proton acceptor in catalysis. Intrachain disulfides connect Cys46–Cys104, Cys60–Cys114, Cys78–Cys129, and Cys85–Cys92. The N-linked (GlcNAc...) asparagine glycan is linked to Asn55. Residues Lys61–Thr65 and Lys86 each bind substrate. Asn100 is a glycosylation site (N-linked (GlcNAc...) asparagine). Arg105 lines the substrate pocket. Catalysis depends on His145, which acts as the Proton donor.

This sequence belongs to the pancreatic ribonuclease family. In terms of assembly, interacts (via N-terminus) with bacterial lipopolysaccharide (LPS).

The protein resides in the secreted. The protein localises to the lysosome. It is found in the cytoplasmic granule. Functionally, ribonuclease which shows a preference for the pyrimidines uridine and cytosine. Has potent antibacterial activity against a range of Gram-positive and Gram-negative bacteria, including P.aeruginosa, A.baumanii, M.luteus, S.aureus, E.faecalis, E.faecium, S.saprophyticus and E.coli. Causes loss of bacterial membrane integrity, and also promotes agglutination of Gram-negative bacteria. Probably contributes to urinary tract sterility. Bactericidal activity is independent of RNase activity. The polypeptide is Ribonuclease K6 (RNASE6) (Chlorocebus aethiops (Green monkey)).